We begin with the raw amino-acid sequence, 206 residues long: Large ribosomal subunit protein uL22m (206 aa).

The transit peptide at 1–40 (MAAAVLGQLGALWIHNLRSRGRLAWGVLPQSYVHTSASLD) directs the protein to the mitochondrion.

Belongs to the universal ribosomal protein uL22 family. In terms of assembly, component of the mitochondrial ribosome large subunit (39S) which comprises a 16S rRNA and about 50 distinct proteins.

The protein resides in the mitochondrion. This is Large ribosomal subunit protein uL22m (MRPL22) from Pongo abelii (Sumatran orangutan).